A 304-amino-acid chain; its full sequence is Putative dihydroorotate dehydrogenase A (fumarate) (304 aa).

FMN is bound by residues serine 22 and 46–47; that span reads KG. Substrate is bound by residues lysine 46 and 70–74; that span reads NSVGL. Asparagine 100 and asparagine 128 together coordinate FMN. Asparagine 128 serves as a coordination point for substrate. The active-site Nucleophile is cysteine 131. 2 residues coordinate FMN: lysine 166 and valine 192. 193-194 contributes to the substrate binding site; it reads NT. Residues glycine 218, 244-245, and 266-267 each bind FMN; these read GG and GT.

It belongs to the dihydroorotate dehydrogenase family. Type 1 subfamily. Homodimer. FMN serves as cofactor.

Its subcellular location is the cytoplasm. The enzyme catalyses (S)-dihydroorotate + fumarate = orotate + succinate. It functions in the pathway pyrimidine metabolism; UMP biosynthesis via de novo pathway. Catalyzes the conversion of dihydroorotate to orotate with fumarate as the electron acceptor. This chain is Putative dihydroorotate dehydrogenase A (fumarate) (pyrD), found in Solibacter usitatus (strain Ellin6076).